The primary structure comprises 166 residues: NADH-quinone oxidoreductase subunit I (166 aa).

2 4Fe-4S ferredoxin-type domains span residues 57 to 87 (LRRYPNGEERCIACKLCEAVCPALAITIESE) and 97 to 126 (TRYDIDMFKCINCGLCEESCPVDSIVVTPI). [4Fe-4S] cluster-binding residues include Cys67, Cys70, Cys73, Cys77, Cys106, Cys109, Cys112, and Cys116.

The protein belongs to the complex I 23 kDa subunit family. In terms of assembly, NDH-1 is composed of 14 different subunits. Subunits NuoA, H, J, K, L, M, N constitute the membrane sector of the complex. Requires [4Fe-4S] cluster as cofactor.

The protein resides in the cell inner membrane. The catalysed reaction is a quinone + NADH + 5 H(+)(in) = a quinol + NAD(+) + 4 H(+)(out). In terms of biological role, NDH-1 shuttles electrons from NADH, via FMN and iron-sulfur (Fe-S) centers, to quinones in the respiratory chain. The immediate electron acceptor for the enzyme in this species is believed to be ubiquinone. Couples the redox reaction to proton translocation (for every two electrons transferred, four hydrogen ions are translocated across the cytoplasmic membrane), and thus conserves the redox energy in a proton gradient. This is NADH-quinone oxidoreductase subunit I from Legionella pneumophila (strain Paris).